A 280-amino-acid polypeptide reads, in one-letter code: Pantothenate synthetase (280 aa).

30-37 (MGYLHEGH) serves as a coordination point for ATP. The active-site Proton donor is the His-37. (R)-pantoate is bound at residue Gln-61. Gln-61 serves as a coordination point for beta-alanine. 147–150 (GQKD) is an ATP binding site. Gln-153 provides a ligand contact to (R)-pantoate. Residues Val-176 and 184 to 187 (MSSR) each bind ATP.

Belongs to the pantothenate synthetase family. In terms of assembly, homodimer.

It localises to the cytoplasm. The enzyme catalyses (R)-pantoate + beta-alanine + ATP = (R)-pantothenate + AMP + diphosphate + H(+). It participates in cofactor biosynthesis; (R)-pantothenate biosynthesis; (R)-pantothenate from (R)-pantoate and beta-alanine: step 1/1. Functionally, catalyzes the condensation of pantoate with beta-alanine in an ATP-dependent reaction via a pantoyl-adenylate intermediate. This chain is Pantothenate synthetase, found in Thermotoga petrophila (strain ATCC BAA-488 / DSM 13995 / JCM 10881 / RKU-1).